A 162-amino-acid chain; its full sequence is Superoxide dismutase [Cu-Zn] (162 aa).

The first 20 residues, 1 to 20, serve as a signal peptide directing secretion; that stretch reads MNKSGIILIGTILFSSMAIA. Cu cation contacts are provided by H66, H68, and H83. C73 and C158 form a disulfide bridge. Zn(2+) is bound by residues H83, H92, H100, and D103. Position 137 (H137) interacts with Cu cation.

This sequence belongs to the Cu-Zn superoxide dismutase family. As to quaternary structure, homodimer. The cofactor is Cu cation. Zn(2+) serves as cofactor.

It is found in the periplasm. It catalyses the reaction 2 superoxide + 2 H(+) = H2O2 + O2. Destroys radicals which are normally produced within the cells and which are toxic to biological systems. This Legionella pneumophila protein is Superoxide dismutase [Cu-Zn] (sodC).